The following is a 177-amino-acid chain: Large ribosomal subunit protein uL6 (177 aa).

The protein belongs to the universal ribosomal protein uL6 family. In terms of assembly, part of the 50S ribosomal subunit.

Its function is as follows. This protein binds to the 23S rRNA, and is important in its secondary structure. It is located near the subunit interface in the base of the L7/L12 stalk, and near the tRNA binding site of the peptidyltransferase center. This chain is Large ribosomal subunit protein uL6, found in Bartonella quintana (strain Toulouse) (Rochalimaea quintana).